A 121-amino-acid polypeptide reads, in one-letter code: Putative RNase MJ0127 (121 aa).

Active-site residues include R76 and H81. The RX(4)HXY motif signature appears at 76 to 83 (RDKLIHHY). An O-di-AMP-tyrosine modification is found at Y83.

Belongs to the HepT RNase toxin family. In terms of assembly, homodimer, probably forms a complex with cognate antitoxin MJ0128. In terms of processing, modified by cognate antitoxin MJ0128; probably at least 2 successive AMPylation events occur on Tyr-83.

Its function is as follows. Probable toxic component of a putative type VII toxin-antitoxin (TA) system, probably an RNase. Probably neutralized by cognate antitoxin MJ0128. Neutralization may be due to AMPylation by MJ0128. This chain is Putative RNase MJ0127, found in Methanocaldococcus jannaschii (strain ATCC 43067 / DSM 2661 / JAL-1 / JCM 10045 / NBRC 100440) (Methanococcus jannaschii).